The chain runs to 131 residues: Profilin (131 aa).

This sequence belongs to the profilin family. In terms of assembly, occurs in many kinds of cells as a complex with monomeric actin in a 1:1 ratio.

The protein localises to the cytoplasm. It localises to the cytoskeleton. Its function is as follows. Binds to actin and affects the structure of the cytoskeleton. At high concentrations, profilin prevents the polymerization of actin, whereas it enhances it at low concentrations. By binding to PIP2, it inhibits the formation of IP3 and DG. The polypeptide is Profilin (Chenopodium album (Fat hen)).